Reading from the N-terminus, the 101-residue chain is uncharacterized protein (101 aa).

A helical transmembrane segment spans residues 68 to 90; that stretch reads LAFAFCGRANTFISCFISFASLI.

Its subcellular location is the membrane. This is an uncharacterized protein from Saccharomyces cerevisiae (strain ATCC 204508 / S288c) (Baker's yeast).